A 159-amino-acid polypeptide reads, in one-letter code: Phosphopantetheine adenylyltransferase (159 aa).

Residue threonine 10 participates in substrate binding. Residues 10-11 (TF) and histidine 18 contribute to the ATP site. The substrate site is built by lysine 42, methionine 74, and arginine 88. ATP contacts are provided by residues 89-91 (GLR), glutamate 99, and 124-130 (WSFISSS).

This sequence belongs to the bacterial CoaD family. In terms of assembly, homohexamer. Mg(2+) is required as a cofactor.

Its subcellular location is the cytoplasm. The catalysed reaction is (R)-4'-phosphopantetheine + ATP + H(+) = 3'-dephospho-CoA + diphosphate. It participates in cofactor biosynthesis; coenzyme A biosynthesis; CoA from (R)-pantothenate: step 4/5. Reversibly transfers an adenylyl group from ATP to 4'-phosphopantetheine, yielding dephospho-CoA (dPCoA) and pyrophosphate. The chain is Phosphopantetheine adenylyltransferase from Klebsiella pneumoniae (strain 342).